A 681-amino-acid chain; its full sequence is Terpene synthase 6, chloroplastic (681 aa).

Residues Asp-433, Asp-437, Asn-577, and Glu-585 each coordinate Mg(2+). Residues 433–437 (DDLFD) carry the DDXXD motif motif.

The protein belongs to the terpene synthase family. The cofactor is Mg(2+). In terms of tissue distribution, expressed in leaves.

The protein localises to the plastid. It is found in the chloroplast. It participates in secondary metabolite biosynthesis; terpenoid biosynthesis. Functionally, may be involved in the biosynthesis of ent-kaurene diterpenoids natural products such as oridonin, miltiradiene, eriocalyxin B and nezukol, known to exhibit antitumor, anti-inflammatory and antibacterial activities. The sequence is that of Terpene synthase 6, chloroplastic from Isodon rubescens (Rabdosia rubescens).